Here is a 275-residue protein sequence, read N- to C-terminus: Large ribosomal subunit protein uL2 (275 aa).

Residues 225 to 275 (MNPVDHPHGGGEGRSPIGRPPVTPWGKPALGTRTRNKKKASSKLIVKRRTK) are disordered. Residues 258-275 (TRNKKKASSKLIVKRRTK) are compositionally biased toward basic residues.

Belongs to the universal ribosomal protein uL2 family. As to quaternary structure, part of the 50S ribosomal subunit. Forms a bridge to the 30S subunit in the 70S ribosome.

Its function is as follows. One of the primary rRNA binding proteins. Required for association of the 30S and 50S subunits to form the 70S ribosome, for tRNA binding and peptide bond formation. It has been suggested to have peptidyltransferase activity; this is somewhat controversial. Makes several contacts with the 16S rRNA in the 70S ribosome. The sequence is that of Large ribosomal subunit protein uL2 from Desulforudis audaxviator (strain MP104C).